The primary structure comprises 227 residues: PKHD-type hydroxylase Bpro_3048 (227 aa).

In terms of domain architecture, Fe2OG dioxygenase spans 78–179 (KIFTPRINRY…RLACFFWVES (102 aa)). The Fe cation site is built by histidine 97, aspartate 99, and histidine 160. Arginine 170 is a binding site for 2-oxoglutarate.

It depends on Fe(2+) as a cofactor. The cofactor is L-ascorbate.

This Polaromonas sp. (strain JS666 / ATCC BAA-500) protein is PKHD-type hydroxylase Bpro_3048.